A 165-amino-acid polypeptide reads, in one-letter code: Phosphopantetheine adenylyltransferase (165 aa).

Residue Thr-10 coordinates substrate. Residues 10–11 (TF) and His-18 each bind ATP. The substrate site is built by Lys-42, Leu-74, and Arg-88. ATP is bound by residues 89 to 91 (GLR), Glu-99, and 124 to 130 (NAFISSS).

This sequence belongs to the bacterial CoaD family. Homohexamer. Mg(2+) serves as cofactor.

The protein resides in the cytoplasm. It catalyses the reaction (R)-4'-phosphopantetheine + ATP + H(+) = 3'-dephospho-CoA + diphosphate. It participates in cofactor biosynthesis; coenzyme A biosynthesis; CoA from (R)-pantothenate: step 4/5. Functionally, reversibly transfers an adenylyl group from ATP to 4'-phosphopantetheine, yielding dephospho-CoA (dPCoA) and pyrophosphate. This chain is Phosphopantetheine adenylyltransferase, found in Helicobacter hepaticus (strain ATCC 51449 / 3B1).